A 429-amino-acid chain; its full sequence is Ribosomal RNA small subunit methyltransferase B (429 aa).

Residues 254–260 (CAAPGGK), aspartate 277, aspartate 303, and aspartate 322 contribute to the S-adenosyl-L-methionine site. Cysteine 375 serves as the catalytic Nucleophile. Residues 397–419 (ALSETGTPDQPGQQNLPGGEEGD) form a disordered region. Positions 400-412 (ETGTPDQPGQQNL) are enriched in polar residues.

The protein belongs to the class I-like SAM-binding methyltransferase superfamily. RsmB/NOP family.

Its subcellular location is the cytoplasm. The enzyme catalyses cytidine(967) in 16S rRNA + S-adenosyl-L-methionine = 5-methylcytidine(967) in 16S rRNA + S-adenosyl-L-homocysteine + H(+). Specifically methylates the cytosine at position 967 (m5C967) of 16S rRNA. In Salmonella enteritidis PT4 (strain P125109), this protein is Ribosomal RNA small subunit methyltransferase B.